A 176-amino-acid polypeptide reads, in one-letter code: Trypsin inhibitor 1B (176 aa).

Cystine bridges form between C39-C83 and C132-C143.

The protein belongs to the protease inhibitor I3 (leguminous Kunitz-type inhibitor) family.

In terms of biological role, inhibits trypsin stoichiometrically. This chain is Trypsin inhibitor 1B, found in Erythrina variegata (Indian coral tree).